The sequence spans 1088 residues: ATP-dependent helicase/deoxyribonuclease subunit B (1088 aa).

This sequence belongs to the helicase family. AddB/RexB type 2 subfamily. As to quaternary structure, heterodimer of AddA and RexB. Requires Mg(2+) as cofactor.

Its function is as follows. The heterodimer acts as both an ATP-dependent DNA helicase and an ATP-dependent, dual-direction single-stranded exonuclease. Recognizes the chi site generating a DNA molecule suitable for the initiation of homologous recombination. This subunit has 5' -&gt; 3' nuclease activity but not helicase activity. This Streptococcus suis (strain 98HAH33) protein is ATP-dependent helicase/deoxyribonuclease subunit B.